Reading from the N-terminus, the 235-residue chain is Adenosine 5'-phosphosulfate reductase (235 aa).

Positions 121, 122, 204, and 207 each coordinate [4Fe-4S] cluster. Residue Cys-230 is the Nucleophile; cysteine thiosulfonate intermediate of the active site.

It belongs to the PAPS reductase family. CysH subfamily. [4Fe-4S] cluster is required as a cofactor.

Its subcellular location is the cytoplasm. It catalyses the reaction [thioredoxin]-disulfide + sulfite + AMP + 2 H(+) = adenosine 5'-phosphosulfate + [thioredoxin]-dithiol. It participates in sulfur metabolism; hydrogen sulfide biosynthesis; sulfite from sulfate. Catalyzes the formation of sulfite from adenosine 5'-phosphosulfate (APS) using thioredoxin as an electron donor. This is Adenosine 5'-phosphosulfate reductase from Anoxybacillus flavithermus (strain DSM 21510 / WK1).